A 213-amino-acid chain; its full sequence is ATP-dependent Clp protease proteolytic subunit (213 aa).

Catalysis depends on serine 114, which acts as the Nucleophile. Histidine 139 is an active-site residue.

This sequence belongs to the peptidase S14 family. As to quaternary structure, fourteen ClpP subunits assemble into 2 heptameric rings which stack back to back to give a disk-like structure with a central cavity, resembling the structure of eukaryotic proteasomes.

It is found in the cytoplasm. It carries out the reaction Hydrolysis of proteins to small peptides in the presence of ATP and magnesium. alpha-casein is the usual test substrate. In the absence of ATP, only oligopeptides shorter than five residues are hydrolyzed (such as succinyl-Leu-Tyr-|-NHMec, and Leu-Tyr-Leu-|-Tyr-Trp, in which cleavage of the -Tyr-|-Leu- and -Tyr-|-Trp bonds also occurs).. Cleaves peptides in various proteins in a process that requires ATP hydrolysis. Has a chymotrypsin-like activity. Plays a major role in the degradation of misfolded proteins. This is ATP-dependent Clp protease proteolytic subunit from Ectopseudomonas mendocina (strain ymp) (Pseudomonas mendocina).